Consider the following 311-residue polypeptide: Uridine phosphorylase 1 (311 aa).

Residues Gly61, Arg95, and 139–142 (RIGT) each bind phosphate. Uridine contacts are provided by residues 143-144 (SG) and 218-220 (QGR).

It belongs to the PNP/UDP phosphorylase family. As to quaternary structure, homodimer. Post-translationally, the N-terminus is blocked.

It carries out the reaction uridine + phosphate = alpha-D-ribose 1-phosphate + uracil. The enzyme catalyses 2'-deoxyuridine + phosphate = 2-deoxy-alpha-D-ribose 1-phosphate + uracil. It participates in pyrimidine metabolism; UMP biosynthesis via salvage pathway; uracil from uridine (phosphorylase route): step 1/1. With respect to regulation, strongly inhibited by 2,2'-anhydro-5-ethyluridine, a competitive inhibitor. Catalyzes the reversible phosphorylytic cleavage of uridine to uracil and ribose-1-phosphate which can then be utilized as carbon and energy sources or in the rescue of pyrimidine bases for nucleotide synthesis. Shows broad substrate specificity and can also accept deoxyuridine and other analogous compounds. The protein is Uridine phosphorylase 1 of Mus musculus (Mouse).